We begin with the raw amino-acid sequence, 706 residues long: Lethal(3)malignant brain tumor-like protein 2 (706 aa).

Positions 1-85 (MEKPRGVEET…GTPRSLDGSG (85 aa)) are disordered. S13 is subject to Phosphoserine. Acidic residues predominate over residues 15–26 (PMEEEEEDDDLE). Residues 39 to 50 (SSAGSESSSYLE) are compositionally biased toward low complexity. Residues 54-63 (EAEHEDREAG) show a composition bias toward basic and acidic residues. S68 bears the Phosphoserine mark. A Phosphothreonine modification is found at T77. An FCS-type zinc finger spans residues 82-117 (DGSGSEPAVCEMCGIVGTREAFFSKTKRFCSVSCSR). C91, C94, C111, and C115 together coordinate Zn(2+). MBT repeat units follow at residues 180–284 (FDWG…LVPP), 292–392 (TDWK…IKLS), 398–501 (MAHH…LTPP), and 509–605 (FSWE…LQPP). S339 carries the phosphoserine modification. K406 is covalently cross-linked (Glycyl lysine isopeptide (Lys-Gly) (interchain with G-Cter in SUMO2)). The tract at residues 606 to 669 (VATEPTTPLK…KAPSEPAPDE (64 aa)) is disordered. The segment covering 620–635 (TKKKKKQFGKKRKRIP) has biased composition (basic residues). Glycyl lysine isopeptide (Lys-Gly) (interchain with G-Cter in SUMO2) cross-links involve residues K648, K660, and K676. Residues 685–706 (ADKALSPELPVPVENIKQETDD) form a disordered region. S690 carries the phosphoserine modification. A Glycyl lysine isopeptide (Lys-Gly) (interchain with G-Cter in SUMO1); alternate cross-link involves residue K701. K701 participates in a covalent cross-link: Glycyl lysine isopeptide (Lys-Gly) (interchain with G-Cter in SUMO2); alternate.

Part of the E2F6.com-1 complex in G0 phase composed of E2F6, MGA, MAX, TFDP1, CBX3, BAT8, EUHMTASE1, RING1, RNF2, MBLR, BAT8 and YAF2.

Its subcellular location is the nucleus. Functionally, putative Polycomb group (PcG) protein. PcG proteins maintain the transcriptionally repressive state of genes, probably via a modification of chromatin, rendering it heritably changed in its expressibility. Its association with a chromatin-remodeling complex suggests that it may contribute to prevent expression of genes that trigger the cell into mitosis. Binds to monomethylated and dimethylated 'Lys-20' on histone H4. Binds histone H3 peptides that are monomethylated or dimethylated on 'Lys-4', 'Lys-9' or 'Lys-27'. This is Lethal(3)malignant brain tumor-like protein 2 (L3MBTL2) from Bos taurus (Bovine).